Consider the following 877-residue polypeptide: Phosphoenolpyruvate carboxylase (877 aa).

Active-site residues include His138 and Lys543.

This sequence belongs to the PEPCase type 1 family. It depends on Mg(2+) as a cofactor.

The enzyme catalyses oxaloacetate + phosphate = phosphoenolpyruvate + hydrogencarbonate. Functionally, forms oxaloacetate, a four-carbon dicarboxylic acid source for the tricarboxylic acid cycle. This Aeromonas salmonicida (strain A449) protein is Phosphoenolpyruvate carboxylase.